A 111-amino-acid polypeptide reads, in one-letter code: BET1-like protein (111 aa).

The Cytoplasmic portion of the chain corresponds to 1-86 (MADWARAQSP…MARSGRDNRK (86 aa)). Residues S9 and S37 each carry the phosphoserine modification. The t-SNARE coiled-coil homology domain maps to 15 to 77 (EILDRENKRM…TGSVKRFSTM (63 aa)). Residues 87–107 (LLCGVAVGLIVAFFILSYLLS) form a helical; Anchor for type IV membrane protein membrane-spanning segment. Over 108 to 111 (RART) the chain is Lumenal.

Component of a SNARE complex consisting of STX5, YKT6, GOSR1 and BET1L. Interacts with STX5.

Its subcellular location is the golgi apparatus membrane. The protein localises to the golgi apparatus. The protein resides in the trans-Golgi network membrane. Its function is as follows. Vesicle SNARE required for targeting and fusion of retrograde transport vesicles with the Golgi complex. Required for the integrity of the Golgi complex. This is BET1-like protein from Bos taurus (Bovine).